Here is a 457-residue protein sequence, read N- to C-terminus: Cyanidin 3-O-galactoside 2''-O-xylosyltransferase FGGT1 (457 aa).

Belongs to the UDP-glycosyltransferase family. As to expression, expressed in ovaries.

The enzyme catalyses cyanidin 3-O-beta-D-galactoside + UDP-alpha-D-xylose = cyanidin 3-O-[beta-D-xylosyl-(1-&gt;2)-beta-D-galactoside] + UDP + H(+). Its pathway is pigment biosynthesis; anthocyanin biosynthesis. Its function is as follows. Xylosyltransferase involved in anthocyanin biosynthesis by catalyzing the xylosylation of cyanidin 3-O-galactoside to form cyanidin 3-O-[2-O-(-xylosyl)-galactoside]. Required for the accumulation of anthocyanin in red-fleshed kiwifruit varieties. The polypeptide is Cyanidin 3-O-galactoside 2''-O-xylosyltransferase FGGT1 (Actinidia chinensis var. chinensis (Chinese soft-hair kiwi)).